Consider the following 545-residue polypeptide: Chaperonin GroEL (545 aa).

ATP-binding positions include 29-32 (TMGP), Lys-50, 86-90 (DGTTT), Gly-414, 477-479 (DAA), and Asp-493.

It belongs to the chaperonin (HSP60) family. As to quaternary structure, forms a cylinder of 14 subunits composed of two heptameric rings stacked back-to-back. Interacts with the co-chaperonin GroES.

The protein localises to the cytoplasm. The enzyme catalyses ATP + H2O + a folded polypeptide = ADP + phosphate + an unfolded polypeptide.. Together with its co-chaperonin GroES, plays an essential role in assisting protein folding. The GroEL-GroES system forms a nano-cage that allows encapsulation of the non-native substrate proteins and provides a physical environment optimized to promote and accelerate protein folding. This Campylobacter jejuni subsp. jejuni serotype O:2 (strain ATCC 700819 / NCTC 11168) protein is Chaperonin GroEL.